A 218-amino-acid polypeptide reads, in one-letter code: Hypoxanthine-guanine phosphoribosyltransferase (218 aa).

GMP-binding positions include Lys-69, 134-142 (EDIIDTGKT), Lys-166, 186-188 (KFV), and Asp-194. Asp-138 acts as the Proton acceptor in catalysis. A Mg(2+)-binding site is contributed by Asp-194.

It belongs to the purine/pyrimidine phosphoribosyltransferase family. As to quaternary structure, homotetramer. Mg(2+) is required as a cofactor.

It localises to the cytoplasm. It catalyses the reaction IMP + diphosphate = hypoxanthine + 5-phospho-alpha-D-ribose 1-diphosphate. It carries out the reaction GMP + diphosphate = guanine + 5-phospho-alpha-D-ribose 1-diphosphate. It participates in purine metabolism; IMP biosynthesis via salvage pathway; IMP from hypoxanthine: step 1/1. Converts guanine to guanosine monophosphate, and hypoxanthine to inosine monophosphate. Transfers the 5-phosphoribosyl group from 5-phosphoribosylpyrophosphate onto the purine. Plays a central role in the generation of purine nucleotides through the purine salvage pathway. The sequence is that of Hypoxanthine-guanine phosphoribosyltransferase (HPRT1) from Gallus gallus (Chicken).